The primary structure comprises 807 residues: DNA gyrase subunit B (807 aa).

The Toprim domain occupies 429–543; the sequence is SELFIVEGDS…KGYLYIAQPP (115 aa). Mg(2+) is bound by residues glutamate 435, aspartate 508, and aspartate 510.

It belongs to the type II topoisomerase GyrB family. In terms of assembly, heterotetramer, composed of two GyrA and two GyrB chains. In the heterotetramer, GyrA contains the active site tyrosine that forms a transient covalent intermediate with DNA, while GyrB binds cofactors and catalyzes ATP hydrolysis. Mg(2+) serves as cofactor. Mn(2+) is required as a cofactor. The cofactor is Ca(2+).

Its subcellular location is the cytoplasm. It catalyses the reaction ATP-dependent breakage, passage and rejoining of double-stranded DNA.. Functionally, a type II topoisomerase that negatively supercoils closed circular double-stranded (ds) DNA in an ATP-dependent manner to modulate DNA topology and maintain chromosomes in an underwound state. Negative supercoiling favors strand separation, and DNA replication, transcription, recombination and repair, all of which involve strand separation. Also able to catalyze the interconversion of other topological isomers of dsDNA rings, including catenanes and knotted rings. Type II topoisomerases break and join 2 DNA strands simultaneously in an ATP-dependent manner. The chain is DNA gyrase subunit B from Rickettsia typhi (strain ATCC VR-144 / Wilmington).